The following is a 414-amino-acid chain: Bifunctional protein GlmU (414 aa).

The tract at residues 1–208 (MDAVILCAGS…SSKLYGIELN (208 aa)) is pyrophosphorylase. UTP contacts are provided by residues 6–9 (LCAG), Gln74, and Gly79. Residues Thr80, Gly130, Asn142, and Asn162 each coordinate N-acetyl-alpha-D-glucosamine 1-phosphate. Residues 209–228 (GYWNDIGRPWDVLSANNYFL) are linker. The segment at 229 to 414 (KNIMPKISGN…KDELIIKKRN (186 aa)) is N-acetyltransferase. His312 acts as the Proton acceptor in catalysis. Residues Ala388 and Lys405 each coordinate acetyl-CoA.

It in the N-terminal section; belongs to the N-acetylglucosamine-1-phosphate uridyltransferase family. In the C-terminal section; belongs to the transferase hexapeptide repeat family.

It carries out the reaction N-acetyl-alpha-D-glucosamine 1-phosphate + UTP + H(+) = UDP-N-acetyl-alpha-D-glucosamine + diphosphate. The enzyme catalyses alpha-D-glucosamine 1-phosphate + acetyl-CoA = N-acetyl-alpha-D-glucosamine 1-phosphate + CoA + H(+). It participates in nucleotide-sugar biosynthesis; UDP-N-acetyl-alpha-D-glucosamine biosynthesis; N-acetyl-alpha-D-glucosamine 1-phosphate from alpha-D-glucosamine 6-phosphate (route II): step 2/2. The protein operates within nucleotide-sugar biosynthesis; UDP-N-acetyl-alpha-D-glucosamine biosynthesis; UDP-N-acetyl-alpha-D-glucosamine from N-acetyl-alpha-D-glucosamine 1-phosphate: step 1/1. Functionally, catalyzes the last two sequential reactions in the de novo biosynthetic pathway for UDP-N-acetyl-glucosamine (UDP-GlcNAc). Responsible for the acetylation of GlcN-1-P to GlcNAc-1-P, and for the uridyl transfer from UTP to GlcNAc-1-P, to produce UDP-GlcNAc and pyrophosphate. This is Bifunctional protein GlmU from Methanococcus vannielii (strain ATCC 35089 / DSM 1224 / JCM 13029 / OCM 148 / SB).